The primary structure comprises 171 residues: MVKLNSNPSEKGAKPPSVEDGFQTVPLITPLEVNHLQLPAPEKVIVKTRTEYQPEQKNKGKFRVPKIAEFTVTILVSLALAFLACIVFLVVYKAFTYDHSCPEGFVYKHKRCIPASLDAYYSSQDPSSRSRFYTVISHYSVAKQSTARAIGPWLSAAAVIHEPKPPKTQGH.

Residues 1-21 are disordered; the sequence is MVKLNSNPSEKGAKPPSVEDG. Topologically, residues 1–71 are cytoplasmic; it reads MVKLNSNPSE…FRVPKIAEFT (71 aa). The chain crosses the membrane as a helical; Signal-anchor for type II membrane protein span at residues 72-92; sequence VTILVSLALAFLACIVFLVVY. At 93–171 the chain is on the lumenal side; that stretch reads KAFTYDHSCP…EPKPPKTQGH (79 aa).

The protein belongs to the NSG family.

It is found in the membrane. Its subcellular location is the golgi apparatus. The protein resides in the trans-Golgi network membrane. It localises to the cell projection. The protein localises to the dendrite. It is found in the endosome membrane. Its subcellular location is the early endosome membrane. The protein resides in the late endosome membrane. It localises to the lysosome lumen. The protein localises to the cytoplasmic vesicle membrane. It is found in the golgi stack membrane. Its subcellular location is the endosome. The protein resides in the multivesicular body membrane. This chain is Neuronal vesicle trafficking-associated protein 2, found in Bos taurus (Bovine).